The chain runs to 126 residues: Glycine cleavage system H protein (126 aa).

The Lipoyl-binding domain occupies 21 to 103; that stretch reads TVTIGISEHA…YEGGWIVKVK (83 aa). Residue K62 is modified to N6-lipoyllysine.

The protein belongs to the GcvH family. In terms of assembly, the glycine cleavage system is composed of four proteins: P, T, L and H. (R)-lipoate serves as cofactor.

The glycine cleavage system catalyzes the degradation of glycine. The H protein shuttles the methylamine group of glycine from the P protein to the T protein. The polypeptide is Glycine cleavage system H protein (Vibrio vulnificus (strain CMCP6)).